The primary structure comprises 669 residues: Protein fem-1 homolog A (669 aa).

7 ANK repeats span residues 2-31 (DLRT…REEL), 40-70 (GGGT…SVEA), 82-111 (EGAP…SVNR), 115-145 (TNST…DLEV), 149-178 (HGHT…QVNR), 182-211 (KGNT…RMER), and 214-243 (YGMT…GQEQ). Phosphoserine is present on Ser-108. The tract at residues 240 to 278 (GQEQVAGGEAQPGLPQEDPSTSQGCAQPQGAPCCSSSPE) is disordered. TPR repeat units follow at residues 298-332 (VEAL…RHQG) and 390-423 (SYYI…QQSN). 2 ANK repeats span residues 534–576 (NGFT…DPDS) and 580–609 (DNNT…HMDA).

This sequence belongs to the fem-1 family. In terms of assembly, component of a CRL2 E3 ubiquitin-protein ligase complex, also named ECS (Elongin BC-CUL2/5-SOCS-box protein) complex, composed of CUL2, Elongin BC (ELOB and ELOC), RBX1 and substrate-specific adapter FEM1A. Interacts with PTGER4. Interacts with NFKB1; the interaction is direct. In terms of processing, phosphorylated; highly phosphorylated in myoblasts and myotubes. Phosphorylation at Ser-108 promotes PGE2-EP4-mediated inhibition of inflammation. Dephosphorylated by protein phosphatase 2A (PP2A). In terms of tissue distribution, present in macrophages derived from peripheral blood monocytes. Also present in atheromata (at protein level).

The protein localises to the mitochondrion. It localises to the cytoplasm. It participates in protein modification; protein ubiquitination. Functionally, substrate-recognition component of a Cul2-RING (CRL2) E3 ubiquitin-protein ligase complex of the DesCEND (destruction via C-end degrons) pathway, which recognizes a C-degron located at the extreme C terminus of target proteins, leading to their ubiquitination and degradation. The C-degron recognized by the DesCEND pathway is usually a motif of less than ten residues and can be present in full-length proteins, truncated proteins or proteolytically cleaved forms. The CRL2(FEM1A) complex specifically recognizes proteins with an arginine at the C-terminus: recognizes and binds proteins ending with -Lys/Arg-Xaa-Arg and -Lys/Arg-Xaa-Xaa-Arg C-degrons, such as SIL1 or OR51B2, leading to their ubiquitination and degradation. Promotes ubiquitination and degradation of SLBP. Involved in PGE2-EP4-mediated inhibition of inflammation of macrophages via interaction with NFKB1 and PTGER4. Promotes inflammation in brain microglia through MAP2K4/MKK4-mediated signaling. The polypeptide is Protein fem-1 homolog A (Homo sapiens (Human)).